Consider the following 447-residue polypeptide: Signal recognition particle 54 kDa protein (447 aa).

Residues 105-112 (GVQGSGKT), 187-191 (DTAGR), and 247-250 (TKMD) each bind GTP.

It belongs to the GTP-binding SRP family. SRP54 subfamily. As to quaternary structure, part of the signal recognition particle protein translocation system, which is composed of SRP and FtsY. Archaeal SRP consists of a 7S RNA molecule of 300 nucleotides and two protein subunits: SRP54 and SRP19.

The protein localises to the cytoplasm. It carries out the reaction GTP + H2O = GDP + phosphate + H(+). In terms of biological role, involved in targeting and insertion of nascent membrane proteins into the cytoplasmic membrane. Binds to the hydrophobic signal sequence of the ribosome-nascent chain (RNC) as it emerges from the ribosomes. The SRP-RNC complex is then targeted to the cytoplasmic membrane where it interacts with the SRP receptor FtsY. This Hyperthermus butylicus (strain DSM 5456 / JCM 9403 / PLM1-5) protein is Signal recognition particle 54 kDa protein.